The following is a 227-amino-acid chain: GTP:AMP phosphotransferase AK3, mitochondrial (227 aa).

GTP-binding residues include Gly17, Gly19, Lys20, Gly21, and Thr22. Lys20 is subject to N6-succinyllysine. Residue Lys29 is modified to N6-acetyllysine; alternate. Lys29 is modified (N6-succinyllysine; alternate). An N6-acetyllysine modification is found at Lys34. Ser37 carries the post-translational modification Phosphoserine. Residues Ser37–Ile66 form an NMP region. Ser38 and Arg43 together coordinate AMP. N6-succinyllysine is present on Lys57. An N6-acetyllysine; alternate mark is found at Lys64 and Lys80. N6-succinyllysine; alternate is present on residues Lys64 and Lys80. AMP is bound at residue Lys64. 3 residues coordinate AMP: Gly91, Arg94, and Gln98. Residues Ala127 to Asp164 form an LID region. The GTP site is built by Arg128, Tyr138, Asn139, Arg161, and Arg172. N6-acetyllysine; alternate is present on residues Lys174 and Lys189. N6-succinyllysine; alternate is present on residues Lys174 and Lys189. Thr201 provides a ligand contact to GTP. Lys203 is subject to N6-acetyllysine.

The protein belongs to the adenylate kinase family. AK3 subfamily. In terms of assembly, monomer.

It is found in the mitochondrion matrix. It carries out the reaction a ribonucleoside 5'-triphosphate + AMP = a ribonucleoside 5'-diphosphate + ADP. The enzyme catalyses GTP + AMP = GDP + ADP. The catalysed reaction is ITP + AMP = IDP + ADP. Functionally, mitochondrial adenylate kinase with a specific GTP:AMP phosphotransferase activity. Could also use ITP as phosphate donor. Its physiological function is to recycle GTP into GDP which is necessary for the TCA cycle in the mitochondrial matrix. This chain is GTP:AMP phosphotransferase AK3, mitochondrial, found in Rattus norvegicus (Rat).